The following is a 238-amino-acid chain: Synapse differentiation-inducing gene protein 1-like (238 aa).

Disordered regions lie at residues 1–24, 78–111, and 126–155; these read MESL…GPYP, KVKE…PGQA, and EEFQ…NFLT. Over 1–162 the chain is Extracellular; it reads MESLSELQNP…FLTLPPRDHL (162 aa). Residues 133–151 show a composition bias toward acidic residues; the sequence is GDPEEEESDATSTESESED. A helical membrane pass occupies residues 163 to 183; sequence GLTIFSMLCCFWPLGIAAFYF. The Cytoplasmic portion of the chain corresponds to 184-205; the sequence is SQGTSKAISKGDFRLANTTSRR. The helical transmembrane segment at 206 to 226 threads the bilayer; sequence ALFLATLSIAVGAGLYVAVVV. Residues 227 to 238 lie on the Extracellular side of the membrane; it reads ALAAYMSQNGHS.

Belongs to the CD225/Dispanin family.

Its subcellular location is the membrane. It is found in the golgi apparatus. It localises to the cis-Golgi network. The polypeptide is Synapse differentiation-inducing gene protein 1-like (SYNDIG1L) (Bos taurus (Bovine)).